A 132-amino-acid chain; its full sequence is Small integral membrane protein 33 (132 aa).

A disordered region spans residues 1–28; it reads MHQAGHYSWPSPAVNSSSEQEPQRQLPE. N-linked (GlcNAc...) asparagine glycosylation is present at N15. Residues 43 to 63 traverse the membrane as a helical segment; it reads PVVTVIVAVFVLLAVCIIVAV. The tract at residues 99 to 132 is disordered; that stretch reads PQDSPEEAPPGPLVPGSCPAPDGPRPSIDEVTCL.

The protein localises to the membrane. In Homo sapiens (Human), this protein is Small integral membrane protein 33.